The sequence spans 536 residues: MENNREGPYSVLTRDQLKGNMKKQIAEISEIFSLSKPDATVLLMFLRWDSHEVSEFLVENNEKVLSESGLKPVVVDPNQDLYKISSCGICFKTCDDGDYLISTPFCSHMFCKSCWRKYLEKNFYLVEKTQTRISCPHGACQAAVGPDTIQKLTVCDQEMYVEYILRSYIEGNKVLEIKYCPAQDCNYVIEFHQKNHDGADQEDYGFNVVCLCGHIFCWRCMLESHKPVTCNNASDWLFRDLNSLSKESGEKPLSLSSFETREKTYPLSSIKATKKVCPHCLRPADLGTKQYLRFLTCACNGRFCWKCMQPEEAHKTESGFYKFCNVSMTFEGRAPKTLEGRAEPENSCVGLWKASEVSLKQAKSDLQAFEESNIKNPSDLTEKDFTIIRKGLMLIVQCRQVLKWSCVYDYLHAEYEMSKREYLRFLQADATSLVESFSKTLNEEIGRASSATYENFCCVKHKVTIETSNIGNYFYHFIKTLQEGLDDVKVKSYDDYGGLFWLCDRCTYGNTWFHKECLMCSDDIAARVDLSDMSLN.

Residues 83 to 328 form a TRIAD supradomain region; that stretch reads KISSCGICFK…GFYKFCNVSM (246 aa). The Zn(2+) site is built by Cys-87, Cys-90, Cys-106, His-108, Cys-111, Cys-114, Cys-135, Cys-140, Cys-180, Cys-185, Cys-210, Cys-212, Cys-217, Cys-220, His-225, Cys-230, Cys-277, Cys-280, Cys-297, Cys-299, Cys-304, Cys-307, His-314, and Cys-324. The RING-type 1 zinc finger occupies 87–140; sequence CGICFKTCDDGDYLISTPFCSHMFCKSCWRKYLEKNFYLVEKTQTRISCPHGAC. Residues 158–230 form an IBR-type zinc finger; the sequence is EMYVEYILRS…MLESHKPVTC (73 aa). The RING-type 2; atypical zinc finger occupies 277 to 307; sequence CPHCLRPADLGTKQYLRFLTCACNGRFCWKC. Residues 495 to 526 form a RanBP2-type zinc finger; sequence DYGGLFWLCDRCTYGNTWFHKECLMCSDDIAA.

It belongs to the RBR family. Ariadne subfamily. Zn(2+) serves as cofactor.

The enzyme catalyses [E2 ubiquitin-conjugating enzyme]-S-ubiquitinyl-L-cysteine + [acceptor protein]-L-lysine = [E2 ubiquitin-conjugating enzyme]-L-cysteine + [acceptor protein]-N(6)-ubiquitinyl-L-lysine.. Its pathway is protein modification; protein ubiquitination. Might act as an E3 ubiquitin-protein ligase, or as part of E3 complex, which accepts ubiquitin from specific E2 ubiquitin-conjugating enzymes and then transfers it to substrates. This chain is Probable E3 ubiquitin-protein ligase ARI13 (ARI13), found in Arabidopsis thaliana (Mouse-ear cress).